We begin with the raw amino-acid sequence, 433 residues long: MQKEDFVDRVTIFVKAGDGGNGAVSFRREKYVPKGGPDGGDGGDGGFVILRANPGLSTLLNFKYQRRFIAQNGQHGKGKKQSGKSGEDLVIDVPVGTIVKDANTGEVLADLDRSWMMVCVARGGKGGRGNIHFATSVFRAPRIAEKGDKGEERWLELELKLLADAGLIGFPNVGKSSLISAMSNARPKIADYPFTTLVPNLGVVKIDENSEFVLADIPGLIERASEGAGLGNLFLRHIERCSVLVHVIDISGSEGRDFIKDYDVIVQELCKYNEQLSRKPQIIVANKIDLLEKDELEKRLETLEKHANQKIYPVSALLRINIDILKQKIFEIVGKSRLLLQKQPVPVFEKPKPIRTKIEERFDFEIKKTQDGFEICGEQIDKWLSRYSLEQKDALERFLDTLERNGLSEKLKQMGAHDGDTVWIGQYSFEYKE.

The Obg domain maps to 4–162 (EDFVDRVTIF…RWLELELKLL (159 aa)). Residues 163–334 (ADAGLIGFPN…LKQKIFEIVG (172 aa)) enclose the OBG-type G domain. Residues 169–176 (GFPNVGKS), 194–198 (FTTLV), 216–219 (DIPG), 286–289 (NKID), and 315–317 (SAL) each bind GTP. Ser-176 and Thr-196 together coordinate Mg(2+). The OCT domain occupies 356 to 433 (TKIEERFDFE…IGQYSFEYKE (78 aa)).

It belongs to the TRAFAC class OBG-HflX-like GTPase superfamily. OBG GTPase family. Monomer. The cofactor is Mg(2+).

Its subcellular location is the cytoplasm. Functionally, an essential GTPase which binds GTP, GDP and possibly (p)ppGpp with moderate affinity, with high nucleotide exchange rates and a fairly low GTP hydrolysis rate. Plays a role in control of the cell cycle, stress response, ribosome biogenesis and in those bacteria that undergo differentiation, in morphogenesis control. The polypeptide is GTPase Obg (Pseudothermotoga lettingae (strain ATCC BAA-301 / DSM 14385 / NBRC 107922 / TMO) (Thermotoga lettingae)).